Reading from the N-terminus, the 100-residue chain is NADH-quinone oxidoreductase subunit K (100 aa).

The next 3 helical transmembrane spans lie at 4 to 24 (LNYGFTISIILFFIGIISLLI), 29 to 49 (IFILVSLEVLINSIILGFILI), and 60 to 80 (VLYIFIVTIATVEVSVMLAIF).

It belongs to the complex I subunit 4L family. NDH-1 is composed of 13 different subunits. Subunits NuoA, H, J, K, L, M, N constitute the membrane sector of the complex.

It is found in the cell membrane. The catalysed reaction is a quinone + NADH + 5 H(+)(in) = a quinol + NAD(+) + 4 H(+)(out). Its function is as follows. NDH-1 shuttles electrons from NADH, via FMN and iron-sulfur (Fe-S) centers, to quinones in the respiratory chain. The immediate electron acceptor for the enzyme in this species is believed to be ubiquinone. Couples the redox reaction to proton translocation (for every two electrons transferred, four hydrogen ions are translocated across the cytoplasmic membrane), and thus conserves the redox energy in a proton gradient. The sequence is that of NADH-quinone oxidoreductase subunit K from Buchnera aphidicola subsp. Cinara cedri (strain Cc).